The primary structure comprises 265 residues: MKKEVCSLAFLKAVFAEFLATLIFVFFGLASALKWPSALPTILQIALAFGLAIGTLAQALGPVSGGHINPAITLALLVGNQISLLRAVFYVVAQLVGAIAGAGILYGLAPGNARGNLAVNSLNNNTTPGQAVVVEMILTFQLALCIFSSTDSRRTSPVGSPALSIGLSVTLGHLVGIYFTGCSMNPARSFGPAVVMNRFSPSHWVFWVGPIVGAAVAAILYFYLLFPNSLSLSERVAVVKGTYESEEDWEEQREERKKTMELTAH.

Residues 1 to 12 lie on the Cytoplasmic side of the membrane; it reads MKKEVCSLAFLK. The chain crosses the membrane as a helical span at residues 13 to 33; the sequence is AVFAEFLATLIFVFFGLASAL. The Extracellular segment spans residues 34-39; it reads KWPSAL. A helical membrane pass occupies residues 40 to 60; the sequence is PTILQIALAFGLAIGTLAQAL. Topologically, residues 61–65 are cytoplasmic; the sequence is GPVSG. The discontinuously helical intramembrane region spans 66 to 74; that stretch reads GHINPAITL. Residues 69 to 71 carry the NPA 1 motif; that stretch reads NPA. At 75–87 the chain is on the cytoplasmic side; it reads ALLVGNQISLLRA. A helical transmembrane segment spans residues 88–108; it reads VFYVVAQLVGAIAGAGILYGL. Over 109 to 126 the chain is Extracellular; sequence APGNARGNLAVNSLNNNT. A glycan (N-linked (GlcNAc...) asparagine) is linked at N124. Residues 127–147 traverse the membrane as a helical segment; it reads TPGQAVVVEMILTFQLALCIF. The Cytoplasmic portion of the chain corresponds to 148–158; the sequence is SSTDSRRTSPV. A helical transmembrane segment spans residues 159 to 179; it reads GSPALSIGLSVTLGHLVGIYF. A topological domain (extracellular) is located at residue T180. An intramembrane region (discontinuously helical) is located at residues 181-191; sequence GCSMNPARSFG. The short motif at 185–187 is the NPA 2 element; that stretch reads NPA. Residues 192–203 lie on the Extracellular side of the membrane; it reads PAVVMNRFSPSH. The chain crosses the membrane as a helical span at residues 204–224; it reads WVFWVGPIVGAAVAAILYFYL. Residues 225–265 lie on the Cytoplasmic side of the membrane; sequence LFPNSLSLSERVAVVKGTYESEEDWEEQREERKKTMELTAH.

Belongs to the MIP/aquaporin (TC 1.A.8) family. Homotetramer; each monomer provides an independent water pore. Interacts with TRPV4; the interaction is probably indirect and regulates TRPV4 activation by hypotonicity.

It localises to the apical cell membrane. The protein localises to the cell membrane. Its subcellular location is the cytoplasmic vesicle membrane. The catalysed reaction is H2O(in) = H2O(out). Its function is as follows. Aquaporins form homotetrameric transmembrane channels, with each monomer independently mediating water transport across the plasma membrane along its osmotic gradient. Plays an important role in fluid secretion in salivary glands. Required for TRPV4 activation by hypotonicity. Together with TRPV4, controls regulatory volume decrease in salivary epithelial cells. Seems to play a redundant role in water transport in the eye, lung and in sweat glands. This Sus scrofa (Pig) protein is Aquaporin-5.